The chain runs to 453 residues: Probable glycine dehydrogenase (decarboxylating) subunit 1 (453 aa).

The protein belongs to the GcvP family. N-terminal subunit subfamily. The glycine cleavage system is composed of four proteins: P, T, L and H. In this organism, the P 'protein' is a heterodimer of two subunits.

It carries out the reaction N(6)-[(R)-lipoyl]-L-lysyl-[glycine-cleavage complex H protein] + glycine + H(+) = N(6)-[(R)-S(8)-aminomethyldihydrolipoyl]-L-lysyl-[glycine-cleavage complex H protein] + CO2. Functionally, the glycine cleavage system catalyzes the degradation of glycine. The P protein binds the alpha-amino group of glycine through its pyridoxal phosphate cofactor; CO(2) is released and the remaining methylamine moiety is then transferred to the lipoamide cofactor of the H protein. This is Probable glycine dehydrogenase (decarboxylating) subunit 1 from Dictyoglomus thermophilum (strain ATCC 35947 / DSM 3960 / H-6-12).